Consider the following 474-residue polypeptide: MSSAASFRTEKDLLGVLEVPAQAYYGIQTLRAINNFRLSGVPISHYPKLVVGLAMVKQAAADANRELGQLSEAKHAAISEACARLIRGDFHEEFVVDMIQGGAGTSTNMNANEVIANIALEAMGHQKGEYQYLHPNNDVNMAQSTNDAYPTAIRLGLLLGHDALLASLDSLIQAFAAKGEEFSHVLKMGRTQLQDAVPMTLGQEFRAFATTLSEDLARLKTLAPELLTEVNLGGTAIGTGINADPRYQALAVQRLATISGQPLVPAADLIEATSDMGAFVLFSGMLKRTAVKLSKICNDLRLLSSGPRTGINEINLPARQPGSSIMPGKVNPVIPEAVNQVAFQIIGNDLALTMAAEGGQLQLNVMEPLIAFKIFDSIRLLQRAMDMLREHCIVGITANEARCRELVEHSIGLVTALNPYIGYENATRIARVALESGRGVLELVREEGLLDDAMLDDILRPENMIAPRLVPLKA.

The L-aspartate site is built by Thr-105, Ser-144, Thr-145, Asn-146, and Thr-191. An SS loop region spans residues 322–331 (GSSIMPGKVN). The Proton acceptor role is filled by Ser-323. L-aspartate contacts are provided by Ser-324 and Lys-329.

This sequence belongs to the class-II fumarase/aspartase family. Aspartase subfamily. In terms of assembly, homotetramer.

The catalysed reaction is L-aspartate = fumarate + NH4(+). Lyase involved in the degradation of canavanine, the delta-oxa-analog of arginine, allowing growth on canavanine as sole nitrogen and carbon source. Probably catalyzes the conversion of L-aspartate to fumarate and ammonia. In Pseudomonas canavaninivorans, this protein is Aspartate ammonia-lyase.